The sequence spans 629 residues: Phosphatidylinositol-3,5-bisphosphate 3-phosphatase MTMR8 (629 aa).

In terms of domain architecture, Myotubularin phosphatase spans 126-500 (GWKLIDLKVD…FSFQFWCGMY (375 aa)). Residues Asn-250, Asn-275, and Ile-276 each coordinate a 1,2-diacyl-sn-glycero-3-phospho-(1D-myo-inositol-3,5-bisphosphate). Positions 250, 275, and 276 each coordinate a 1,2-diacyl-sn-glycero-3-phospho-(1D-myo-inositol-3-phosphate). Cys-338 serves as the catalytic Phosphocysteine intermediate. A 1,2-diacyl-sn-glycero-3-phospho-(1D-myo-inositol-3,5-bisphosphate) is bound by residues Ser-339, Asp-340, Gly-341, Trp-342, Asp-343, Arg-344, Lys-380, and Arg-384. 6 residues coordinate a 1,2-diacyl-sn-glycero-3-phospho-(1D-myo-inositol-3-phosphate): Ser-339, Asp-340, Gly-341, Trp-342, Asp-343, and Arg-344. Phosphate contacts are provided by Ser-339 and Asp-340. Phosphate contacts are provided by Trp-342, Asp-343, and Arg-344. Arg-384 serves as a coordination point for a 1,2-diacyl-sn-glycero-3-phospho-(1D-myo-inositol-3-phosphate). Positions 517-543 (LLSCMNQKIKLEDNASELENKLPFLDG) form a coiled coil.

It belongs to the protein-tyrosine phosphatase family. Non-receptor class myotubularin subfamily. As to quaternary structure, homodimer.

It localises to the nucleus envelope. The catalysed reaction is a 1,2-diacyl-sn-glycero-3-phospho-(1D-myo-inositol-3,5-bisphosphate) + H2O = a 1,2-diacyl-sn-glycero-3-phospho-(1D-myo-inositol-5-phosphate) + phosphate. The enzyme catalyses a 1,2-diacyl-sn-glycero-3-phospho-(1D-myo-inositol-3-phosphate) + H2O = a 1,2-diacyl-sn-glycero-3-phospho-(1D-myo-inositol) + phosphate. It catalyses the reaction 1,2-dioctanoyl-sn-glycero-3-phospho-(1D-myo-inositol-3,5-bisphosphate) + H2O = 1,2-dioctanoyl-sn-glycero-3-phospho-(1D-myo-inositol-5-phosphate) + phosphate. Functionally, lipid phosphatase that specifically dephosphorylates the D-3 position of phosphatidylinositol 3-phosphate and phosphatidylinositol 3,5-bisphosphate, generating phosphatidylinositol and phosphatidylinositol 5-phosphate. In Gallus gallus (Chicken), this protein is Phosphatidylinositol-3,5-bisphosphate 3-phosphatase MTMR8.